The primary structure comprises 181 residues: Large ribosomal subunit protein uL5 (181 aa).

Belongs to the universal ribosomal protein uL5 family. In terms of assembly, part of the 50S ribosomal subunit; part of the 5S rRNA/L5/L18/L25 subcomplex. Contacts the 5S rRNA and the P site tRNA. Forms a bridge to the 30S subunit in the 70S ribosome.

Its function is as follows. This is one of the proteins that bind and probably mediate the attachment of the 5S RNA into the large ribosomal subunit, where it forms part of the central protuberance. In the 70S ribosome it contacts protein S13 of the 30S subunit (bridge B1b), connecting the 2 subunits; this bridge is implicated in subunit movement. Contacts the P site tRNA; the 5S rRNA and some of its associated proteins might help stabilize positioning of ribosome-bound tRNAs. This chain is Large ribosomal subunit protein uL5, found in Desulforamulus reducens (strain ATCC BAA-1160 / DSM 100696 / MI-1) (Desulfotomaculum reducens).